A 592-amino-acid chain; its full sequence is Aspartate--tRNA ligase (592 aa).

Glu171 provides a ligand contact to L-aspartate. Residues 195–198 form an aspartate region; sequence QLFK. Arg217 is an L-aspartate binding site. ATP is bound by residues 217-219 and Gln226; that span reads RDE. His448 is an L-aspartate binding site. ATP is bound at residue Glu482. Arg489 serves as a coordination point for L-aspartate. 534–537 provides a ligand contact to ATP; that stretch reads GLDR.

The protein belongs to the class-II aminoacyl-tRNA synthetase family. Type 1 subfamily. In terms of assembly, homodimer.

It localises to the cytoplasm. It catalyses the reaction tRNA(Asp) + L-aspartate + ATP = L-aspartyl-tRNA(Asp) + AMP + diphosphate. Its function is as follows. Catalyzes the attachment of L-aspartate to tRNA(Asp) in a two-step reaction: L-aspartate is first activated by ATP to form Asp-AMP and then transferred to the acceptor end of tRNA(Asp). This is Aspartate--tRNA ligase from Vibrio vulnificus (strain YJ016).